We begin with the raw amino-acid sequence, 266 residues long: tRNA (guanine-N(1)-)-methyltransferase (266 aa).

S-adenosyl-L-methionine-binding positions include Gly-113 and 137–142 (LGDYVL).

It belongs to the RNA methyltransferase TrmD family. As to quaternary structure, homodimer.

It is found in the cytoplasm. It catalyses the reaction guanosine(37) in tRNA + S-adenosyl-L-methionine = N(1)-methylguanosine(37) in tRNA + S-adenosyl-L-homocysteine + H(+). Its function is as follows. Specifically methylates guanosine-37 in various tRNAs. The sequence is that of tRNA (guanine-N(1)-)-methyltransferase from Paenarthrobacter aurescens (strain TC1).